The sequence spans 308 residues: Ribosomal RNA large subunit methyltransferase F (308 aa).

Belongs to the methyltransferase superfamily. METTL16/RlmF family.

The protein localises to the cytoplasm. The catalysed reaction is adenosine(1618) in 23S rRNA + S-adenosyl-L-methionine = N(6)-methyladenosine(1618) in 23S rRNA + S-adenosyl-L-homocysteine + H(+). In terms of biological role, specifically methylates the adenine in position 1618 of 23S rRNA. In Salmonella dublin (strain CT_02021853), this protein is Ribosomal RNA large subunit methyltransferase F.